We begin with the raw amino-acid sequence, 1360 residues long: Activating molecule in BECN1-regulated autophagy protein 1B (1360 aa).

WD repeat units lie at residues 50-89, 92-132, and 134-174; these read DNPR…CLHS, GHRR…ESWF, and ESNV…AVVK. Positions 249 to 258 are enriched in polar residues; that stretch reads RSSGAQANDQ. Disordered stretches follow at residues 249–277, 315–364, 412–490, 514–573, 587–616, 664–688, and 754–796; these read RSSG…FQYP, PTGL…NSAH, GVET…QRNN, ELER…RCRS, WERS…EDPG, PTVS…NPDE, and TLSN…MPRN. Positions 319 to 333 are enriched in low complexity; sequence QPSDSTQPQTQSGPS. Residues 350-361 show a composition bias toward polar residues; the sequence is AFSSVFSGTAGN. The segment covering 428-437 has biased composition (low complexity); sequence SSSSMDLLSL. Composition is skewed to polar residues over residues 443 to 454 and 473 to 490; these read GSSSSPIYTSAT and DGTS…QRNN. Positions 590 to 607 are enriched in low complexity; the sequence is SGQTSSSSSSQEGPSWPL. Polar residues predominate over residues 754 to 768; the sequence is TLSNSQADSQSNNPS. Residues 775–784 show a composition bias toward acidic residues; sequence SDGDYEDIEE. Short sequence motifs (TQT motif) lie at residues 1109 to 1111 and 1121 to 1123; these read TQT. Disordered stretches follow at residues 1120–1142 and 1241–1360; these read ETQT…TSRH and SQTS…LYGR. 2 stretches are compositionally biased toward polar residues: residues 1129–1142 and 1241–1252; these read SAST…TSRH and SQTSVRTAQGGN. The segment covering 1278–1288 has biased composition (low complexity); that stretch reads APGPSGSSGAP. Over residues 1311–1321 the composition is skewed to basic and acidic residues; it reads FGDRQPDDVQR. Residues 1329–1347 show a composition bias toward low complexity; it reads NMSNHSNNNNNDHSNSYSE. Residues 1348–1360 show a composition bias toward basic and acidic residues; the sequence is SRSRDYPDDLYGR.

Belongs to the WD repeat AMBRA1 family. Component of the DCX(AMBRA1) E3 ubiquitin ligase complex.

It localises to the endoplasmic reticulum. The protein localises to the cytoplasm. It is found in the cytoskeleton. Its subcellular location is the cytoplasmic vesicle. The protein resides in the autophagosome. It localises to the mitochondrion. The protein localises to the cytosol. It is found in the nucleus. Its subcellular location is the cell junction. The protein resides in the focal adhesion. It functions in the pathway protein modification; protein ubiquitination. Functionally, substrate-recognition component of a DCX (DDB1-CUL4-X-box) E3 ubiquitin-protein ligase complex involved in cell cycle control and autophagy. The DCX(AMBRA1) complex specifically mediates the polyubiquitination of target proteins. Acts as an upstream master regulator of the transition from G1 to S cell phase: ambra1b specifically recognizes and binds phosphorylated cyclin-D (ccnd1, ccnd2 and ccnd3), leading to cyclin-D ubiquitination by the DCX(AMBRA1) complex and subsequent degradation. Acts as a regulator of Cul5-RING (CRL5) E3 ubiquitin-protein ligase complexes by mediating ubiquitination and degradation of Elongin-C (eloc) component of CRL5 complexes. Acts as a key regulator of autophagy by modulating the BECN1-PIK3C3 complex: controls protein turnover during neuronal development, and regulates normal cell survival and proliferation. In normal conditions, ambra1b is tethered to the cytoskeleton via interaction with dyneins light chains. Upon autophagy induction, ambra1b is released from the cytoskeletal docking site to induce autophagosome nucleation by mediating ubiquitination of proteins involved in autophagy. Also acts as an activator of mitophagy. Required for skeletal muscle development. This Danio rerio (Zebrafish) protein is Activating molecule in BECN1-regulated autophagy protein 1B.